The chain runs to 576 residues: MEAKGKVVGVIGNLVTIEMVGTVSMNEIVFIKTGGQSLKAEIIRIRDGEVDAQVFEMTRGIAVGDDVEFTDKLLTVELGPGLLSQVYDGLQNPLPELATKCGFFLERGLYLSALDRNKKWSFNATAKVGDFIVAGDFLGFVIEGTINHKIMVPFDRRDSYRIIEIVGDGDYTVDDRIAVIEDDAGGKHIITMSFHWPVKVPVTSYKKRLIPNETMVTQTRIIDTFFPVAKGGTFCIPGPFGAGKTVLQQVTSRNADVDIVIIAACGERAGEVVETLKEFPELTDPRTGKSLMERTCIICNTSSMPVAAREASVYTAITISEYYRQMGLDILLLADSTSRWAQAMREMSGRLEEIPGDEAFPAYLESVIASFYERAGVVVLNNGSVGSVTVGGSVSPAGGNFEEPVTQATLKVVGAFHGLTRERSDARKFPAINPLDSWSKYRGVVEYEATEYARAFLVKGNEVNQMMRVVGEDGVSIDDFVVYLKSELLDSCYLQQNSFDSVDAAVSFERQNYMFNILYKILQSDFKFENKLEARSFINDLRQNILDMNLAPFKQEKFNKLEINLKNLLRSKKLDF.

An ATP-binding site is contributed by 238-245; the sequence is GPFGAGKT.

The protein belongs to the ATPase alpha/beta chains family.

It carries out the reaction ATP + H2O + 4 H(+)(in) = ADP + phosphate + 5 H(+)(out). Produces ATP from ADP in the presence of a proton gradient across the membrane. The V-type alpha chain is a catalytic subunit. The protein is V-type ATP synthase alpha chain of Borrelia recurrentis (strain A1).